Reading from the N-terminus, the 779-residue chain is Acyl-CoA dehydrogenase family member 11 (779 aa).

An N6-acetyllysine mark is found at Lys-163, Lys-166, and Lys-175. At Ser-210 the chain carries Phosphoserine. Residue Tyr-323 is modified to Phosphotyrosine. An N6-succinyllysine mark is found at Lys-368 and Lys-390. Residues 503 to 513 (FCMTEPNVSSS), 511 to 513 (SSS), 537 to 539 (WSS), and Ser-539 contribute to the FAD site. Ser-513 serves as a coordination point for substrate. 628–631 (GPGR) is a binding site for substrate. FAD contacts are provided by residues Arg-656, Gln-726, and 726 to 730 (QVHGG). Residue Gly-754 coordinates substrate. FAD contacts are provided by residues 755–757 (PDE) and Glu-757. Residue Lys-765 is modified to N6-acetyllysine.

This sequence belongs to the acyl-CoA dehydrogenase family. As to quaternary structure, homodimer. Requires FAD as cofactor.

The protein resides in the peroxisome. It is found in the mitochondrion membrane. It carries out the reaction a 2,3-saturated acyl-CoA + oxidized [electron-transfer flavoprotein] + H(+) = a (2E)-enoyl-CoA + reduced [electron-transfer flavoprotein]. The catalysed reaction is docosanoyl-CoA + oxidized [electron-transfer flavoprotein] + H(+) = (2E)-docosenoyl-CoA + reduced [electron-transfer flavoprotein]. It catalyses the reaction tetracosanoyl-CoA + oxidized [electron-transfer flavoprotein] + H(+) = (2E)-tetracosenoyl-CoA + reduced [electron-transfer flavoprotein]. The enzyme catalyses eicosanoyl-CoA + oxidized [electron-transfer flavoprotein] + H(+) = (2E)-eicosenoyl-CoA + reduced [electron-transfer flavoprotein]. It carries out the reaction hexacosanoyl-CoA + oxidized [electron-transfer flavoprotein] + H(+) = (2E)-hexacosenoyl-CoA + reduced [electron-transfer flavoprotein]. The catalysed reaction is tricosanoyl-CoA + oxidized [electron-transfer flavoprotein] + H(+) = (2E)-tricosenoyl-CoA + reduced [electron-transfer flavoprotein]. It participates in lipid metabolism; fatty acid beta-oxidation. In terms of biological role, acyl-CoA dehydrogenase, that exhibits maximal activity towards saturated C22-CoA. Probably participates in beta-oxydation and energy production but could also play a role in the metabolism of specific fatty acids to control fatty acids composition of cellular lipids in brain. In Mus musculus (Mouse), this protein is Acyl-CoA dehydrogenase family member 11 (Acad11).